A 204-amino-acid chain; its full sequence is Holliday junction resolvase RecU (204 aa).

Residues 1–24 are disordered; it reads MTIHYPNGQQPVQHYNTHNELPTP. Residues 7 to 24 are compositionally biased toward polar residues; it reads NGQQPVQHYNTHNELPTP. Mg(2+)-binding residues include threonine 87, aspartate 89, aspartate 102, and glutamine 121.

Belongs to the RecU family. Requires Mg(2+) as cofactor.

The protein resides in the cytoplasm. The enzyme catalyses Endonucleolytic cleavage at a junction such as a reciprocal single-stranded crossover between two homologous DNA duplexes (Holliday junction).. In terms of biological role, endonuclease that resolves Holliday junction intermediates in genetic recombination. Cleaves mobile four-strand junctions by introducing symmetrical nicks in paired strands. Promotes annealing of linear ssDNA with homologous dsDNA. Required for DNA repair, homologous recombination and chromosome segregation. The chain is Holliday junction resolvase RecU from Limosilactobacillus reuteri (strain DSM 20016) (Lactobacillus reuteri).